The sequence spans 1278 residues: NPC intracellular cholesterol transporter 1 (1278 aa).

An N-terminal signal peptide occupies residues 1-22 (MTARGLALGLLLLLLCPAQVFS). The Lumenal portion of the chain corresponds to 23–261 (QSCVWYGECG…QPPPPPAPWT (239 aa)). 9 cysteine pairs are disulfide-bonded: cysteine 25-cysteine 74, cysteine 31-cysteine 42, cysteine 63-cysteine 109, cysteine 75-cysteine 113, cysteine 97-cysteine 238, cysteine 100-cysteine 160, cysteine 177-cysteine 184, cysteine 227-cysteine 243, and cysteine 240-cysteine 247. Asparagine 41 provides a ligand contact to cholesterol. Asparagine 70 carries an N-linked (GlcNAc...) asparagine glycan. Glutamine 79 is a cholesterol binding site. Residues asparagine 122 and asparagine 135 are each glycosylated (N-linked (GlcNAc...) asparagine). N-linked (GlcNAc...) asparagine; atypical glycosylation occurs at asparagine 158. The tract at residues 175 to 205 (LLCGKDADACNATNWIEYMFNKDNGQAPFTI) is important for cholesterol binding and cholesterol transfer from NPC1 to liposomes. N-linked (GlcNAc...) asparagine glycans are attached at residues asparagine 185 and asparagine 222. A helical transmembrane segment spans residues 262 to 282 (ILGLDAMYVIMWITYMAFLLV). At 283–350 (FFGAFFAVWC…RWGSFCVRNP (68 aa)) the chain is on the cytoplasmic side. Residues 351-371 (GCVIFFSLVFITACSSGLVFV) traverse the membrane as a helical segment. At 372–620 (RVTTNPVDLW…DELNRESDSD (249 aa)) the chain is on the lumenal side. N-linked (GlcNAc...) asparagine glycans are attached at residues asparagine 452, asparagine 459, asparagine 478, asparagine 524, asparagine 557, asparagine 572, and asparagine 598. Cystine bridges form between cysteine 468–cysteine 479 and cysteine 516–cysteine 533. An SSD domain is found at 620-785 (DVFTVVISYA…ITCFVSLLGL (166 aa)). A helical transmembrane segment spans residues 621–641 (VFTVVISYAIMFLYISLALGH). Residues 642 to 653 (MKSCRRLLVDSK) are Cytoplasmic-facing. Residues 654–675 (VSLGIAGILIVLSSVACSLGVF) form a helical membrane-spanning segment. The Lumenal portion of the chain corresponds to 676–685 (SYIGLPLTLI). The chain crosses the membrane as a helical span at residues 686 to 706 (VIEVIPFLVLAVGVDNIFILV). Over 707–730 (QAYQRDERLQGETLDQQLGRVLGE) the chain is Cytoplasmic. The chain crosses the membrane as a helical span at residues 731 to 751 (VAPSMFLSSFSETVAFFLGAL). The Lumenal segment spans residues 752–759 (SVMPAVHT). The helical transmembrane segment at 760–783 (FSLFAGLAVFIDFLLQITCFVSLL) threads the bilayer. Topologically, residues 784 to 832 (GLDIKRQEKNRLDIFCCVRGAEDGTSVQASESCLFRFFKNSYSPLLLKD) are cytoplasmic. A helical membrane pass occupies residues 833-853 (WMRPIVIAIFVGVLSFSIAVL). The Lumenal segment spans residues 854 to 1097 (NKVDIGLDQS…YEQYLTIIDD (244 aa)). A disulfide bond links cysteine 909 and cysteine 914. Asparagine 916, asparagine 931, asparagine 961, asparagine 968, asparagine 1064, and asparagine 1072 each carry an N-linked (GlcNAc...) asparagine glycan. 3 disulfides stabilise this stretch: cysteine 956/cysteine 1011, cysteine 957/cysteine 979, and cysteine 967/cysteine 976. A helical membrane pass occupies residues 1098-1118 (TIFNLGVSLGAIFLVTMVLLG). Residues 1119 to 1124 (CELWSA) are Cytoplasmic-facing. Residues 1125 to 1145 (VIMCATIAMVLVNMFGVMWLW) form a helical membrane-spanning segment. At 1146–1150 (GISLN) the chain is on the lumenal side. Residues 1151 to 1171 (AVSLVNLVMSCGISVEFCSHI) form a helical membrane-spanning segment. At 1172–1194 (TRAFTVSMKGSRVERAEEALAHM) the chain is on the cytoplasmic side. A helical membrane pass occupies residues 1195–1215 (GSSVFSGITLTKFGGIVVLAF). Over 1216–1223 (AKSQIFQI) the chain is Lumenal. The chain crosses the membrane as a helical span at residues 1224–1244 (FYFRMYLAMVLLGATHGLIFL). At 1245-1278 (PVLLSYIGPSVNKAKSCATEERYKGTERERLLNF) the chain is on the cytoplasmic side. Residues 1275–1278 (LLNF) form a required for location in lysosomes region. The short motif at 1275 to 1278 (LLNF) is the Di-leucine motif element.

This sequence belongs to the patched family. Interacts (via the second lumenal domain) with NPC2. Interacts with TMEM97; the interaction may decrease NPC1 availability to the cell. Interacts with TIM1. Interacts with SLC38A9; this interaction inhibits cholesterol-mediated mTORC1 activation via its sterol transport activity. In terms of assembly, (Microbial infection) Interacts with ebolavirus glycoprotein. In terms of processing, N-glycosylated.

The protein localises to the late endosome membrane. It is found in the lysosome membrane. The enzyme catalyses cholesterol(in) = cholesterol(out). Its function is as follows. Intracellular cholesterol transporter which acts in concert with NPC2 and plays an important role in the egress of cholesterol from the endosomal/lysosomal compartment. Unesterified cholesterol that has been released from LDLs in the lumen of the late endosomes/lysosomes is transferred by NPC2 to the cholesterol-binding pocket in the N-terminal domain of NPC1. Cholesterol binds to NPC1 with the hydroxyl group buried in the binding pocket. Binds oxysterol with higher affinity than cholesterol. May play a role in vesicular trafficking in glia, a process that may be crucial for maintaining the structural and functional integrity of nerve terminals. Inhibits cholesterol-mediated mTORC1 activation throught its interaction with SLC38A9. (Microbial infection) Acts as an endosomal entry receptor for ebolavirus. This is NPC intracellular cholesterol transporter 1 from Homo sapiens (Human).